A 103-amino-acid chain; its full sequence is UPF0145 protein BLi01945/BL05168 (103 aa).

Belongs to the UPF0145 family.

This is UPF0145 protein BLi01945/BL05168 from Bacillus licheniformis (strain ATCC 14580 / DSM 13 / JCM 2505 / CCUG 7422 / NBRC 12200 / NCIMB 9375 / NCTC 10341 / NRRL NRS-1264 / Gibson 46).